We begin with the raw amino-acid sequence, 258 residues long: Phosphate import ATP-binding protein PstB (258 aa).

The region spanning 12–253 (IQVHNLNFYY…PKMKQTEDYI (242 aa)) is the ABC transporter domain. 44–51 (GPSGCGKS) contributes to the ATP binding site.

The protein belongs to the ABC transporter superfamily. Phosphate importer (TC 3.A.1.7) family. As to quaternary structure, the complex is composed of two ATP-binding proteins (PstB), two transmembrane proteins (PstC and PstA) and a solute-binding protein (PstS).

It localises to the cell inner membrane. It carries out the reaction phosphate(out) + ATP + H2O = ADP + 2 phosphate(in) + H(+). Functionally, part of the ABC transporter complex PstSACB involved in phosphate import. Responsible for energy coupling to the transport system. This Photorhabdus laumondii subsp. laumondii (strain DSM 15139 / CIP 105565 / TT01) (Photorhabdus luminescens subsp. laumondii) protein is Phosphate import ATP-binding protein PstB.